The primary structure comprises 65 residues: Probable tautomerase RSp1151 (65 aa).

P2 (proton acceptor; via imino nitrogen) is an active-site residue.

The protein belongs to the 4-oxalocrotonate tautomerase family.

This chain is Probable tautomerase RSp1151, found in Ralstonia nicotianae (strain ATCC BAA-1114 / GMI1000) (Ralstonia solanacearum).